Consider the following 178-residue polypeptide: Large ribosomal subunit protein uL6 (178 aa).

It belongs to the universal ribosomal protein uL6 family. In terms of assembly, part of the 50S ribosomal subunit.

Its function is as follows. This protein binds to the 23S rRNA, and is important in its secondary structure. It is located near the subunit interface in the base of the L7/L12 stalk, and near the tRNA binding site of the peptidyltransferase center. In Corynebacterium urealyticum (strain ATCC 43042 / DSM 7109), this protein is Large ribosomal subunit protein uL6.